The chain runs to 482 residues: tRNA sulfurtransferase (482 aa).

Positions 61–165 (NQVLTAVTHT…NEKLNLVIAR (105 aa)) constitute a THUMP domain. ATP contacts are provided by residues 183–184 (LI), Lys-265, Gly-287, and Gln-296. Cys-344 and Cys-456 form a disulfide bridge. One can recognise a Rhodanese domain in the interval 404–482 (LGSDVVVLDI…GYKNVKVYRP (79 aa)). The active-site Cysteine persulfide intermediate is Cys-456.

The protein belongs to the ThiI family.

The protein localises to the cytoplasm. It carries out the reaction [ThiI sulfur-carrier protein]-S-sulfanyl-L-cysteine + a uridine in tRNA + 2 reduced [2Fe-2S]-[ferredoxin] + ATP + H(+) = [ThiI sulfur-carrier protein]-L-cysteine + a 4-thiouridine in tRNA + 2 oxidized [2Fe-2S]-[ferredoxin] + AMP + diphosphate. It catalyses the reaction [ThiS sulfur-carrier protein]-C-terminal Gly-Gly-AMP + S-sulfanyl-L-cysteinyl-[cysteine desulfurase] + AH2 = [ThiS sulfur-carrier protein]-C-terminal-Gly-aminoethanethioate + L-cysteinyl-[cysteine desulfurase] + A + AMP + 2 H(+). The protein operates within cofactor biosynthesis; thiamine diphosphate biosynthesis. Catalyzes the ATP-dependent transfer of a sulfur to tRNA to produce 4-thiouridine in position 8 of tRNAs, which functions as a near-UV photosensor. Also catalyzes the transfer of sulfur to the sulfur carrier protein ThiS, forming ThiS-thiocarboxylate. This is a step in the synthesis of thiazole, in the thiamine biosynthesis pathway. The sulfur is donated as persulfide by IscS. The polypeptide is tRNA sulfurtransferase (Aliivibrio salmonicida (strain LFI1238) (Vibrio salmonicida (strain LFI1238))).